A 2138-amino-acid chain; its full sequence is Non-reducing polyketide synthase rads2 (2138 aa).

The segment at 11–249 (LIFGDQTDSW…NPLNIHALQH (239 aa)) is N-terminal acylcarrier protein transacylase (SAT) domain. The Ketosynthase family 3 (KS3) domain occupies 373–804 (SGRIAIVGMA…GGNACMLLED (432 aa)). Active-site for beta-ketoacyl synthase activity residues include C549, H684, and H724. Residues 901-1184 (VFVFGGQGSH…KGVCTSFVRA (284 aa)) form a malonyl-CoA:ACP transacylase (MAT) domain region. S992 (for acyl/malonyl transferase activity) is an active-site residue. The interval 1291–1437 (AQYVVQESPS…KDVQRLQADW (147 aa)) is N-terminal hotdog fold. The 320-residue stretch at 1291–1610 (AQYVVQESPS…FHEISNATLK (320 aa)) folds into the PKS/mFAS DH domain. A product template (PT) domain region spans residues 1303 to 1607 (KKIQVTFRAS…GLEFHEISNA (305 aa)). The C-terminal hotdog fold stretch occupies residues 1459–1610 (HGHRFQPDIF…FHEISNATLK (152 aa)). The interval 1618 to 1666 (SKSVLKPDNAAPLKAPEKKEDATPTAPKKSADPGKEEEEEGDTATPAAV) is disordered. A Carrier domain is found at 1666–1740 (VGEFEVIIQT…DLRRAFAMAP (75 aa)). S1700 is subject to O-(pantetheine 4'-phosphoryl)serine. Residues 1740–1771 (PSSSSSTSASESVSESLDDSSSTSRSATPSSS) show a composition bias toward low complexity. Disordered stretches follow at residues 1740–1781 (PSSS…GFVE) and 1807–1828 (QATK…SSPA). Positions 1860–2006 (ADGTGSIATY…TRRHLGAMFS (147 aa)) are thioesterase (TE) domain.

Its pathway is secondary metabolite biosynthesis. In terms of biological role, non-reducing polyketide synthase; part of the gene cluster that mediates the biosynthesis of radicicol, a resorcylic acid lactone (RAL) that irreversibly inhibits the HSP90 molecular chaperone, an important target for cancer chemotherapy. The cluster encodes only two apparent post-PKS enzymes, a cytochrome P450 monooxygenase (radP) and a non-heme halogenase (radH) that introduce the epoxide and the chlorine, respectively. If this cluster includes all the genes required for radicicol biosynthesis, the remaining structural features of radicicol are presumably generated by the PKSs rads1 and rads2. The C-2' ketone could arise if the R-PKS rads1 and NR-PKS rads2 each carry out four iterations, in contrast to the five iteration-three iteration split for the hypothemycin PKSs. The origin of the cis 5',6' double bond is not known. The radicicol R-PKS rads1 ER domain may catalyze either double bond isomerization or reduction in the third iteration. This is Non-reducing polyketide synthase rads2 from Floropilus chiversii (Chaetomium chiversii).